Reading from the N-terminus, the 403-residue chain is Protein WVD2-like 6 (403 aa).

Disordered regions lie at residues 1-179 and 254-403; these read MDSE…ALPN and LKKI…AVEP. A compositionally biased stretch (polar residues) spans 25-56; sequence GDSSNGNGGTSENLECCSTQHPMEASEGTQNE. The segment covering 103-118 has biased composition (low complexity); it reads SVAPNVKPVKSPKSKS. Position 113 is a phosphoserine (S113). Basic and acidic residues-rich tracts occupy residues 120-132, 139-153, and 162-171; these read NGRE…HGNH, GTRD…RKQV, and QYPKEDDGKP. The segment covering 263 to 273 has biased composition (basic residues); the sequence is KSPKLGRKKTN. A compositionally biased stretch (low complexity) spans 336–348; that stretch reads KVAPAKAVTASTK. A compositionally biased stretch (basic and acidic residues) spans 385–394; it reads VNEDRNESHM.

This sequence belongs to the TPX2 family. Expressed in seedlings.

It localises to the cytoplasm. It is found in the cytoskeleton. Functionally, microtubule-associated protein (MAP) that regulates the orientation of interphase cortical microtubules. This Arabidopsis thaliana (Mouse-ear cress) protein is Protein WVD2-like 6.